The sequence spans 347 residues: Selenide, water dikinase (347 aa).

The active site involves C17. ATP is bound by residues K20 and 48–50 (TRD). D51 serves as a coordination point for Mg(2+). ATP-binding positions include D68, D91, and 139-141 (GHS). D91 contributes to the Mg(2+) binding site. Residue D227 coordinates Mg(2+).

The protein belongs to the selenophosphate synthase 1 family. Class I subfamily. As to quaternary structure, homodimer. Requires Mg(2+) as cofactor.

The catalysed reaction is hydrogenselenide + ATP + H2O = selenophosphate + AMP + phosphate + 2 H(+). In terms of biological role, synthesizes selenophosphate from selenide and ATP. This is Selenide, water dikinase from Escherichia coli O139:H28 (strain E24377A / ETEC).